A 596-amino-acid chain; its full sequence is Protein Malvolio (596 aa).

The disordered stretch occupies residues 1-34; it reads MSSNEAYHEPGAGGDGPGGSSGASGGGSQRSNQL. Gly residues predominate over residues 11 to 28; that stretch reads GAGGDGPGGSSGASGGGS. An N-linked (GlcNAc...) asparagine glycan is attached at Asn41. 7 helical membrane passes run 77-97, 105-125, 154-174, 186-206, 216-236, 263-283, and 309-329; these read LWAF…PGNI, AAAK…GLLM, WILW…EVIG, VVPL…FLFL, FLFG…YIVS, AVGV…SALV, and VALF…AHGM. A glycan (N-linked (GlcNAc...) asparagine) is linked at Asn359. The next 5 membrane-spanning stretches (helical) occupy residues 373–393, 424–444, 463–483, 490–510, and 520–540; these read LFLG…GILA, VLVT…FSKM, PFAA…GEFV, IVSI…VVVQ, and LLAL…YLVI. N-linked (GlcNAc...) asparagine glycosylation occurs at Asn574.

The protein belongs to the NRAMP family. In terms of tissue distribution, expressed in macrophages and in the nervous system.

Its subcellular location is the membrane. Putative transporter required for normal taste behavior. May be a nitrite/nitrate transporter. This chain is Protein Malvolio (Mvl), found in Drosophila melanogaster (Fruit fly).